Consider the following 120-residue polypeptide: MVNETGESQKAAKGTPVSGKVWKAEKTPLRAKSRVVKNKKLTSWELKKQKRLEDKQFKERLKALKDEKEEARQAKITMLKERREKKEENERYERLAAKMHAKKVERMRRREKRNKALKER.

2 disordered regions span residues 1–26 (MVNE…KAEK) and 81–120 (ERRE…LKER). Residues 47-106 (KKQKRLEDKQFKERLKALKDEKEEARQAKITMLKERREKKEENERYERLAAKMHAKKVER) adopt a coiled-coil conformation. Over residues 81 to 96 (ERREKKEENERYERLA) the composition is skewed to basic and acidic residues. Positions 97–113 (AKMHAKKVERMRRREKR) are enriched in basic residues.

The protein belongs to the CGR1 family.

It is found in the nucleus. The protein localises to the nucleolus. Involved in nucleolar integrity and required for processing of the pre-rRNA for the 60S ribosome subunit. The polypeptide is rRNA-processing protein CGR1 (CGR1) (Saccharomyces cerevisiae (strain ATCC 204508 / S288c) (Baker's yeast)).